The chain runs to 240 residues: Adiponectin (240 aa).

Positions 1–17 are cleaved as a signal peptide; it reads MLLQGALLLLLALPSHG. The residue at position 28 (Lys-28) is a 5-hydroxylysine. Residue Lys-28 is glycosylated (O-linked (Gal...) hydroxylysine). Positions 29–100 are disordered; that stretch reads GACAGWMAGI…GTPGRKGEPG (72 aa). Cys-31 carries the S-(2-succinyl)cysteine modification. Residues Pro-39, Pro-42, and Pro-48 each carry the 4-hydroxyproline modification. One can recognise a Collagen-like domain in the interval 43 to 102; that stretch reads GHNGTPGRDGRDGTPGEKGEKGDPGLVGPKGDTGETGITGIEGPRGFPGTPGRKGEPGES. Positions 50 to 65 are enriched in basic and acidic residues; that stretch reads RDGRDGTPGEKGEKGD. A 5-hydroxylysine mark is found at Lys-60, Lys-63, and Lys-72. Residues Lys-60, Lys-63, and Lys-72 are each glycosylated (O-linked (Gal...) hydroxylysine). Pro-86 bears the 4-hydroxyproline mark. Lys-96 is modified (5-hydroxylysine). O-linked (Gal...) hydroxylysine glycosylation is present at Lys-96. The region spanning 103-240 is the C1q domain; it reads AYVYRSAFSV…GFLLYHNIVE (138 aa).

In terms of assembly, homomultimer. Forms trimers, hexamers and 12- to 18-mers. The trimers (low molecular weight complexes / LMW) are assembled via non-covalent interactions of the collagen-like domains in a triple helix and hydrophobic interactions within the globular C1q domain. Several trimers can associate to form disulfide-linked hexamers (middle molecular weight complexes / MMW) and larger complexes (higher molecular weight / HMW). The HMW-complex assembly is also modulated by the degree of lysine hydroxylation and glycosylation. LMW, MMW and HMW complexes bind to HBEGF, MMW and HMW complexes bind to PDGFB, and HMW complex binds to FGF2. Interacts with CTRP9 via the C1q domain (heterotrimeric complex). HMW complexes are more extensively glycosylated than smaller oligomers. Hydroxylation and glycosylation of the lysine residues within the collagen-like domain of adiponectin seem to be critically involved in regulating the formation and/or secretion of HMW complexes and consequently contribute to the insulin-sensitizing activity of adiponectin in hepatocytes. In terms of processing, O-glycosylated. O-linked glycans on hydroxylysine residues consist of Glc-Gal disaccharides bound to the oxygen atom of post-translationally added hydroxyl groups. O-linked glycosylations elsewhere disialylated with the structure Neu5Acalpha2-&gt;8Neu5Acalpha2-&gt;3Gal. Sialylated by alpha 2,8-sialyltransferase III. Desialylated forms are rapidly cleared from the circulation. Not N-glycosylated. Post-translationally, succination of Cys-31 by the Krebs cycle intermediate fumarate, which leads to S-(2-succinyl)cysteine residues, inhibits polymerization and secretion of adiponectin. Adiponectin is a major target for succination in both adipocytes and adipose tissue of diabetic mammals. It was proposed that succination of proteins is a biomarker of mitochondrial stress and accumulation of Krebs cycle intermediates in adipose tissue in diabetes and that succination of adiponectin may contribute to the decrease in plasma adiponectin in diabetes.

It is found in the secreted. Its activity is regulated as follows. Polymerization and secretion of adiponectin is inhibited by succination of cysteine residues by the Krebs cycle intermediate fumarate, which leads to S-(2-succinyl)cysteine residues. Functionally, important adipokine involved in the control of fat metabolism and insulin sensitivity, with direct anti-diabetic, anti-atherogenic and anti-inflammatory activities. Stimulates AMPK phosphorylation and activation in the liver and the skeletal muscle, enhancing glucose utilization and fatty-acid combustion. Antagonizes TNF-alpha by negatively regulating its expression in various tissues such as liver and macrophages, and also by counteracting its effects. Inhibits endothelial NF-kappa-B signaling through a cAMP-dependent pathway. May play a role in cell growth, angiogenesis and tissue remodeling by binding and sequestering various growth factors with distinct binding affinities, depending on the type of complex, LMW, MMW or HMW. In Bos taurus (Bovine), this protein is Adiponectin (ADIPOQ).